A 295-amino-acid polypeptide reads, in one-letter code: (R)-3-hydroxydecanoyl-ACP:CoA transacylase (295 aa).

An AB hydrolase-1 domain is found at 28 to 254 (NTIILINGSL…VIRDAGHFLD (227 aa)).

Its pathway is polyester biosynthesis; polyhydroxyalkanoate biosynthesis. In terms of biological role, catalyzes the transfer of the acyl moiety from in vitro synthesized 3-hydroxydecanoyl-CoA to acyl carrier protein. This chain is (R)-3-hydroxydecanoyl-ACP:CoA transacylase (phaG), found in Pseudomonas putida (strain ATCC 47054 / DSM 6125 / CFBP 8728 / NCIMB 11950 / KT2440).